We begin with the raw amino-acid sequence, 256 residues long: Photosystem I chlorophyll a/b-binding protein 5, chloroplastic (256 aa).

The transit peptide at 1 to 32 directs the protein to the chloroplast; that stretch reads MAVVLRGGITGGFLHHRRDASSVITRRISSVK. At alanine 33 the chain carries N-acetylalanine. Chlorophyll b is bound at residue tryptophan 49. Residues phenylalanine 69 and glutamate 88 each contribute to the chlorophyll a site. Residue arginine 93 participates in chlorophyll b binding. The next 2 membrane-spanning stretches (helical) occupy residues 94–113 and 129–146; these read FAMLGVAGILFTDLLRTTGI and FASTKTLIVVQFLLMGFA. 2 residues coordinate chlorophyll b: glutamate 147 and arginine 150. Lysine 205, glutamate 206, asparagine 209, arginine 211, glutamine 223, and histidine 238 together coordinate chlorophyll a. Residues 212-232 form a helical membrane-spanning segment; the sequence is LAMMAMLGFFVQASVTHTGPI.

It belongs to the light-harvesting chlorophyll a/b-binding (LHC) protein family. The LHC complex consists of chlorophyll a-b binding proteins. Homodimer. Heterodimer with LHCA2 and, possibly, LHCA3. Can substitute to LHCA4 to form a complex with LHCA1. Binds pigments. Element of the NAD(P)H dehydrogenase-photosystem I supercomplex (NDH-PSI). Requires Binds at least 14 chlorophylls (8 Chl-a and 6 Chl-b) and carotenoids such as lutein and neoxanthin. as cofactor. Photoregulated by reversible phosphorylation of its threonine residues.

It is found in the plastid. It localises to the chloroplast thylakoid membrane. In terms of biological role, the light-harvesting complex (LHC) functions as a light receptor, it captures and delivers excitation energy to photosystems with which it is closely associated. Seems involved in the function of the photosystem I in low light conditions, when other LHCA proteins are less abundant. Required, together with LHCA6, for the formation of a full-size NAD(P)H dehydrogenase-photosystem I supercomplex (NDH-PSI) that triggers cyclic and chlororespiratory electron transport in chloroplast thylakoids, especially under stress conditions (e.g. increased light intensity). The chain is Photosystem I chlorophyll a/b-binding protein 5, chloroplastic from Arabidopsis thaliana (Mouse-ear cress).